The chain runs to 142 residues: FAD synthase (142 aa).

ATP-binding positions include threonine 9 to phenylalanine 10, histidine 14 to histidine 17, aspartate 92, and tyrosine 119.

This sequence belongs to the archaeal FAD synthase family. As to quaternary structure, homodimer. Requires a divalent metal cation as cofactor.

The catalysed reaction is FMN + ATP + H(+) = FAD + diphosphate. It participates in cofactor biosynthesis; FAD biosynthesis; FAD from FMN: step 1/1. Functionally, catalyzes the transfer of the AMP portion of ATP to flavin mononucleotide (FMN) to produce flavin adenine dinucleotide (FAD) coenzyme. The chain is FAD synthase from Halorhabdus utahensis (strain DSM 12940 / JCM 11049 / AX-2).